We begin with the raw amino-acid sequence, 601 residues long: Glutamine--fructose-6-phosphate aminotransferase [isomerizing] (601 aa).

The active-site Nucleophile; for GATase activity is C2. The 215-residue stretch at 2 to 216 (CGIVGYIGTN…DKEIVIVTKD (215 aa)) folds into the Glutamine amidotransferase type-2 domain. SIS domains follow at residues 282–421 (ILDE…EIGD) and 453–591 (IAGE…VDKP). K596 functions as the For Fru-6P isomerization activity in the catalytic mechanism.

In terms of assembly, homodimer.

The protein localises to the cytoplasm. The enzyme catalyses D-fructose 6-phosphate + L-glutamine = D-glucosamine 6-phosphate + L-glutamate. In terms of biological role, catalyzes the first step in hexosamine metabolism, converting fructose-6P into glucosamine-6P using glutamine as a nitrogen source. This Listeria innocua serovar 6a (strain ATCC BAA-680 / CLIP 11262) protein is Glutamine--fructose-6-phosphate aminotransferase [isomerizing].